The primary structure comprises 564 residues: Benomyl/methotrexate resistance protein (564 aa).

Residues 60-101 form a disordered region; that stretch reads IDNQGEPNSSQSSSSNNTIVDNNNNNNNDVDGDKIVVTWDGD. Residues 67-88 show a composition bias toward low complexity; the sequence is NSSQSSSSNNTIVDNNNNNNND. Helical transmembrane passes span 116-136, 153-173, 184-204, 210-229, 241-262, 274-294, 358-374, 393-411, 431-451, 457-476, 489-506, and 530-551; these read AFFIFQISFLTTSVYMGSAVY, VATLPLTLFVIGYGVGPLVFS, TSIYIITLFLFVILQIPTALV, LCILRFLGGFFASPCLATGG, LPVGLAAWSLGAVCGPSFGPFF, WTFWFMCIISGFSFVMLCFTL, IYIAMVYSILYLFFEVF, YMSIVIGIVIAAFIYIPVI, IPIAIVGGILLTSGLFIFGWS, HWVGPLFGAATTASGAFLIF, PHYIASVFASNDLFRSVI, and WGSSVLGFITLVMIAIPVLFYL.

Belongs to the major facilitator superfamily. CAR1 family.

It is found in the membrane. In terms of biological role, probable transporter. Confers resistance to benomyl and methotrexate. This Candida albicans (Yeast) protein is Benomyl/methotrexate resistance protein (MDR1).